A 154-amino-acid polypeptide reads, in one-letter code: Lipoprotein signal peptidase (154 aa).

Helical transmembrane passes span 55 to 75 (GHMWFFYLITVVVIGIIIYIM) and 84 to 104 (LFSISLAFILGGAIGNFIDRV). Residues Asp111 and Asp129 contribute to the active site. A helical transmembrane segment spans residues 124 to 144 (IFNVADASLSVGVVLMLVYVF).

This sequence belongs to the peptidase A8 family.

The protein localises to the cell membrane. The catalysed reaction is Release of signal peptides from bacterial membrane prolipoproteins. Hydrolyzes -Xaa-Yaa-Zaa-|-(S,diacylglyceryl)Cys-, in which Xaa is hydrophobic (preferably Leu), and Yaa (Ala or Ser) and Zaa (Gly or Ala) have small, neutral side chains.. The protein operates within protein modification; lipoprotein biosynthesis (signal peptide cleavage). Its function is as follows. This protein specifically catalyzes the removal of signal peptides from prolipoproteins. The polypeptide is Lipoprotein signal peptidase (Listeria monocytogenes serovar 1/2a (strain ATCC BAA-679 / EGD-e)).